Reading from the N-terminus, the 314-residue chain is Ribonuclease Z (314 aa).

Residues histidine 61, histidine 63, aspartate 65, histidine 66, histidine 137, aspartate 207, and histidine 263 each contribute to the Zn(2+) site. Aspartate 65 functions as the Proton acceptor in the catalytic mechanism.

The protein belongs to the RNase Z family. As to quaternary structure, homodimer. It depends on Zn(2+) as a cofactor.

It catalyses the reaction Endonucleolytic cleavage of RNA, removing extra 3' nucleotides from tRNA precursor, generating 3' termini of tRNAs. A 3'-hydroxy group is left at the tRNA terminus and a 5'-phosphoryl group is left at the trailer molecule.. Its function is as follows. Zinc phosphodiesterase, which displays some tRNA 3'-processing endonuclease activity. Probably involved in tRNA maturation, by removing a 3'-trailer from precursor tRNA. This is Ribonuclease Z from Thermococcus gammatolerans (strain DSM 15229 / JCM 11827 / EJ3).